A 133-amino-acid chain; its full sequence is MKLLVGILVAVCLHQYLLNADSNTKGWSEVLKGSECKPRPIVVPVSETHPELTSQRFNPPCVTLMRCGGCCNDESLECVPTEEVNVSMELLGASGSGSNGMQRLSFVEHKKCDCRPRFTTTPPTTTRPPRRRR.

An N-terminal signal peptide occupies residues 1-20 (MKLLVGILVAVCLHQYLLNA). 3 disulfides stabilise this stretch: cysteine 36-cysteine 78, cysteine 67-cysteine 112, and cysteine 71-cysteine 114. An N-linked (GlcNAc...) asparagine; by host glycan is attached at asparagine 85.

The protein belongs to the PDGF/VEGF growth factor family. As to quaternary structure, homodimer; disulfide-linked.

It is found in the secreted. In terms of biological role, induces endothelial proliferation. The protein is Vascular endothelial growth factor homolog of Orf virus (strain NZ2) (OV NZ-2).